Reading from the N-terminus, the 279-residue chain is Movement protein (279 aa).

Residues 247–279 are disordered; the sequence is ESEELNVESPPAAIGSSSASRSEAFRPQVVNGL. The span at 254–268 shows a compositional bias: low complexity; the sequence is ESPPAAIGSSSASRS.

It belongs to the cucumovirus movement protein family.

The protein localises to the host cell junction. It is found in the host plasmodesma. In terms of biological role, transports viral genome to neighboring plant cells directly through plasmosdesmata, without any budding. The movement protein allows efficient cell to cell propagation, by bypassing the host cell wall barrier. Acts by forming a tubular structure at the host plasmodesmata, enlarging it enough to allow free passage of virion capsids. The sequence is that of Movement protein from Cucumis sativus (Cucumber).